We begin with the raw amino-acid sequence, 435 residues long: Glutamate-1-semialdehyde 2,1-aminomutase (435 aa).

At K266 the chain carries N6-(pyridoxal phosphate)lysine.

Belongs to the class-III pyridoxal-phosphate-dependent aminotransferase family. HemL subfamily. Homodimer. Requires pyridoxal 5'-phosphate as cofactor.

Its subcellular location is the cytoplasm. It carries out the reaction (S)-4-amino-5-oxopentanoate = 5-aminolevulinate. The protein operates within porphyrin-containing compound metabolism; protoporphyrin-IX biosynthesis; 5-aminolevulinate from L-glutamyl-tRNA(Glu): step 2/2. The chain is Glutamate-1-semialdehyde 2,1-aminomutase from Nitrosomonas europaea (strain ATCC 19718 / CIP 103999 / KCTC 2705 / NBRC 14298).